Reading from the N-terminus, the 689-residue chain is DNA ligase (689 aa).

NAD(+) contacts are provided by residues 40–44 (DAEYD), 89–90 (SL), and E121. Catalysis depends on K123, which acts as the N6-AMP-lysine intermediate. NAD(+) contacts are provided by R144, E179, K295, and K319. Positions 413, 416, 431, and 437 each coordinate Zn(2+). Positions 610-689 (KEHSSLTGKI…EEWLTIVNNV (80 aa)) constitute a BRCT domain.

This sequence belongs to the NAD-dependent DNA ligase family. LigA subfamily. Mg(2+) is required as a cofactor. Requires Mn(2+) as cofactor.

It carries out the reaction NAD(+) + (deoxyribonucleotide)n-3'-hydroxyl + 5'-phospho-(deoxyribonucleotide)m = (deoxyribonucleotide)n+m + AMP + beta-nicotinamide D-nucleotide.. In terms of biological role, DNA ligase that catalyzes the formation of phosphodiester linkages between 5'-phosphoryl and 3'-hydroxyl groups in double-stranded DNA using NAD as a coenzyme and as the energy source for the reaction. It is essential for DNA replication and repair of damaged DNA. This is DNA ligase from Rickettsia canadensis (strain McKiel).